The primary structure comprises 599 residues: NADH-ubiquinone oxidoreductase chain 5 (599 aa).

Helical transmembrane passes span 1 to 21, 41 to 61, 79 to 99, 114 to 134, 137 to 157, 166 to 186, 198 to 218, 237 to 257, 269 to 289, 297 to 317, 323 to 343, 362 to 382, 400 to 420, 453 to 473, 478 to 498, 509 to 529, and 578 to 598; these read MALM…PLVF, FITS…IIIL, LDLY…SIME, FLNY…ANNM, LFIG…WWYG, LQAI…MAWF, IFSL…AAMG, TPVS…FLLI, IMTT…ICAL, IIAF…GINQ, LHIC…GSII, MPLT…TPFM, INSW…AYST, LMLG…PVNM, MPFT…IVAM, MYPN…PTII, and GMLK…MLIM.

Belongs to the complex I subunit 5 family.

It localises to the mitochondrion inner membrane. The enzyme catalyses a ubiquinone + NADH + 5 H(+)(in) = a ubiquinol + NAD(+) + 4 H(+)(out). In terms of biological role, core subunit of the mitochondrial membrane respiratory chain NADH dehydrogenase (Complex I) that is believed to belong to the minimal assembly required for catalysis. Complex I functions in the transfer of electrons from NADH to the respiratory chain. The immediate electron acceptor for the enzyme is believed to be ubiquinone. This chain is NADH-ubiquinone oxidoreductase chain 5 (ND5), found in Geomys personatus (Texas pocket gopher).